The sequence spans 523 residues: (R)-citramalate synthase (523 aa).

Residues 6-272 (VEVLDTTLRD…KGNESLKKLK (267 aa)) enclose the Pyruvate carboxyltransferase domain.

This sequence belongs to the alpha-IPM synthase/homocitrate synthase family.

It catalyses the reaction pyruvate + acetyl-CoA + H2O = (3R)-citramalate + CoA + H(+). It functions in the pathway amino-acid biosynthesis; L-isoleucine biosynthesis; 2-oxobutanoate from pyruvate: step 1/3. Inhibited by isoleucine. Catalyzes the condensation of pyruvate and acetyl-coenzyme A to form (R)-citramalate. Makes part of a pathway for isoleucine biosynthesis, i.e. the citramalate-dependent pathway. Also displays a low alpha-isopropylmalate synthase activity, using 2-oxoisovalerate as substrate, but is unable to use 2-oxoglutarate. This chain is (R)-citramalate synthase, found in Sulfolobus acidocaldarius (strain ATCC 33909 / DSM 639 / JCM 8929 / NBRC 15157 / NCIMB 11770).